Consider the following 366-residue polypeptide: MTPEHLPTEQYEAQLAEKVARLQSMMAPFSGLVPEVFRSPVSHYRMRAEFRLWHDGDDLYHIMFDQQTKSRIRVDTFPAASQLINTLMKAMIAGVRDNHALRHKLFQIDYLTTLSNQAVVSLLYHKKLDEEWREAATALRDALRAQGLNVHLIGRATKTKIELDQDYIDERLPVAGKEIIYRQVENSFTQPNAAMNIQMLEWALEVTKDSKGDLLELYCGNGNFSLALTRNFNRVLATEIAKPSVAAAQYNIAANHIDNVQIIRMAAEEFTQAMNGVREFNRLQGIDLKRYQCETIFVDPPRSGLDSETEKMVQAYPRILYISCNPETLCKNLETLSQTHTVSRLALFDQFPYTHHMECGVLLTAR.

Residues Gln-190, Tyr-218, Asn-223, Glu-239, and Asp-299 each coordinate S-adenosyl-L-methionine. The Nucleophile role is filled by Cys-324. Glu-358 functions as the Proton acceptor in the catalytic mechanism.

This sequence belongs to the class I-like SAM-binding methyltransferase superfamily. RNA M5U methyltransferase family. TrmA subfamily.

It catalyses the reaction uridine(54) in tRNA + S-adenosyl-L-methionine = 5-methyluridine(54) in tRNA + S-adenosyl-L-homocysteine + H(+). The catalysed reaction is uridine(341) in tmRNA + S-adenosyl-L-methionine = 5-methyluridine(341) in tmRNA + S-adenosyl-L-homocysteine + H(+). Dual-specificity methyltransferase that catalyzes the formation of 5-methyluridine at position 54 (m5U54) in all tRNAs, and that of position 341 (m5U341) in tmRNA (transfer-mRNA). The sequence is that of tRNA/tmRNA (uracil-C(5))-methyltransferase from Salmonella paratyphi C (strain RKS4594).